A 441-amino-acid polypeptide reads, in one-letter code: Ribosomal protein uS12 methylthiotransferase RimO (441 aa).

Residues 8-118 (PKIGFVSLGC…VLQHVHHYVP (111 aa)) enclose the MTTase N-terminal domain. [4Fe-4S] cluster is bound by residues cysteine 17, cysteine 53, cysteine 82, cysteine 150, cysteine 154, and cysteine 157. Residues 136 to 373 (LTPRHYAYLK…MQLQQQISAE (238 aa)) enclose the Radical SAM core domain. The TRAM domain maps to 376-441 (QEKVGREILV…DEYDLWGSRV (66 aa)).

This sequence belongs to the methylthiotransferase family. RimO subfamily. It depends on [4Fe-4S] cluster as a cofactor.

The protein localises to the cytoplasm. It carries out the reaction L-aspartate(89)-[ribosomal protein uS12]-hydrogen + (sulfur carrier)-SH + AH2 + 2 S-adenosyl-L-methionine = 3-methylsulfanyl-L-aspartate(89)-[ribosomal protein uS12]-hydrogen + (sulfur carrier)-H + 5'-deoxyadenosine + L-methionine + A + S-adenosyl-L-homocysteine + 2 H(+). In terms of biological role, catalyzes the methylthiolation of an aspartic acid residue of ribosomal protein uS12. This is Ribosomal protein uS12 methylthiotransferase RimO from Salmonella typhi.